A 215-amino-acid chain; its full sequence is MTFDYARRYMPEDQTGKTTVVGNMVAGMCAGVAESVLVLTPGENLKTRLIDDRAGARLYQSSTHAIRTIVTKDGASTFFRGVLPVTLKQSNSSMVRFTSYNQLAPMLQPTCGVSTSVVAGALAGVITVYCTMPFDNVKTQMQSLDGSRIYSSSWDCAKKLVVNGGPRRLWKGTTPRLLRLSVAGAIAFTLYEEVVRLTGFLVLPKVAAKAPKDAA.

2 Solcar repeats span residues 18–106 and 111–197; these read TTVV…LAPM and CGVS…VVRL. 3 consecutive transmembrane segments (helical) span residues 19 to 39, 112 to 132, and 182 to 202; these read TVVG…VLVL, GVST…YCTM, and VAGA…GFLV.

The protein belongs to the mitochondrial carrier (TC 2.A.29) family.

It localises to the mitochondrion inner membrane. It participates in mycotoxin biosynthesis. Functionally, tricarboxylate transporter; part of the gene cluster that mediates the biosynthesis of the host-selective toxins (HSTs) AAL-toxins, sphinganine-analog mycotoxins responsible for Alternaria stem canker on tomato by the tomato pathotype. The biosynthesis starts with the polyketide synthase ALT1-catalyzed C-16 carbon chain assembly from one starter acetyl-CoA unit with malonyl-CoA extender units. ALT1 also selectively transfers methyl groups at the first and the third cycle of chain elongation for AAL toxin. The C-16 polyketide chain is released from the enzyme by a nucleophilic attack of a carbanion, which is derived from R-carbon of glycin by decarboxylation, on the carbonyl carbon of polyketide acyl chain. This step is probably catalyzed by a pyridoxal 5'-phosphate-dependent aminoacyl transferase ALT4. The respective functions of the other enzymes encoded by the cluster have still to be elucidated. The sphingosine N-acyltransferase-like protein ALT7 seems not to act as a resistance/self-tolerance factor against the toxin in the toxin biosynthetic gene cluster, contrary to what is expected. The protein is Tricarboxylate transporter ALT9 of Alternaria alternata (Alternaria rot fungus).